A 1070-amino-acid polypeptide reads, in one-letter code: MLGDENGEMSTIPGLNQIQFEGFCGFMDRGLTEELYKFPKIEDTEQEIEFQLFVETYQLVEPLIKERDAVYESLTYSSELYVSAGLIWKTSKDMQEQTIFIGNIPLMNSLGTSIVNGIYRIVINQILQSPGIYYRSELDHNGISVYTGTIISDWGGRLELEIDRKARIWARVSRKQKISILVLSSAMGSNLREILENVCYPEIFLSFLTDKEKKKIGSKENAILEFYQQFSCVGGDPVFSESLCKELQKKFFQQRCELGRIGRRNMNQRLNLNIPQNNTFLLPRDILAAADRLIGMKFGMGPLDDMNHLKNKRIRSVADLLQDQFGLALVRLENVVRGTICGAIRHKLIPTPQNLVTSTPLTTTYESFFGLHPLSQVLDRTNPLTQIVHGRKLSYLGPGGLTGRTANFRIRDIHPSHYGRICPIDTSEGINVGLIGSLAIHARIGHWGSLESPFYKIFERSKKAQMLYLSPSRDEYYMVAAGNSLALNQGIQEEQVVPARYRQEFLTIAWEQVHLRSIFPFQYFSIGASLIPFIEHNDANRALMSSNMQRQAVPLSRSEKCIVGTGLERQVALDSGVPAIADHEGKIISTDTDKIILSGNGDALGIPLVMYQRSNKNTCMHQTARVRRGKCIKKGQILADGAATVGGELALGKNVLVAYMPWEGYNFEDAVLISERLVYEDIYTSFHIRKYEIQTHVTSQGPERITNEIPHLEAHLLRNLDKNGIVMLGSWVETGDILVGKLTPQVAKESSYAPEDRLLRAILGIQVSTSKETCLKLPIGGRGRVIDVRWVQKKGGSSYNPETIRVYISQKREIKVGDKVAGRHGNKGIISKILPRQDMPYLQDGRPVDMVFNPLGVPSRMNVGQLFECSLGLAGSLLDRHYRIAPFDERYEQEASRKLVFSELYQASKQTANPWVFEPEYPGKSRIFDGRTGGPFEQPVIIGKPYILKLIHQVDDKIHGRSSGHYALVTQQPLRGRSKQGGQRVGEMEVWALEGFGVAHILQEMLTYKSDHIRARQEVLGTTIIGGTIPKPEDAPESFRLLVRELRSLALELNHFLVSEKNFQINRKEA.

The protein belongs to the RNA polymerase beta chain family. In terms of assembly, in plastids the minimal PEP RNA polymerase catalytic core is composed of four subunits: alpha, beta, beta', and beta''. When a (nuclear-encoded) sigma factor is associated with the core the holoenzyme is formed, which can initiate transcription.

The protein resides in the plastid. The protein localises to the chloroplast. The enzyme catalyses RNA(n) + a ribonucleoside 5'-triphosphate = RNA(n+1) + diphosphate. DNA-dependent RNA polymerase catalyzes the transcription of DNA into RNA using the four ribonucleoside triphosphates as substrates. The sequence is that of DNA-directed RNA polymerase subunit beta from Gossypium hirsutum (Upland cotton).